The following is a 245-amino-acid chain: Polyhedrin (245 aa).

It belongs to the polyhedrin family.

Functionally, major component of the virus occlusion bodies, which are large proteinaceous structures (polyhedra), that protect the virus from the outside environment for extended periods until they are ingested by insect larvae. In Lepidoptera (butterflies and moths), this protein is Polyhedrin.